A 236-amino-acid chain; its full sequence is tRNA (guanine-N(7)-)-methyltransferase (236 aa).

Residues Gly54, 77 to 78 (EI), 110 to 111 (NA), and Leu130 contribute to the S-adenosyl-L-methionine site. The active site involves Asp133. 208 to 210 (TEE) serves as a coordination point for S-adenosyl-L-methionine.

It belongs to the class I-like SAM-binding methyltransferase superfamily. TrmB family.

It localises to the nucleus. The catalysed reaction is guanosine(46) in tRNA + S-adenosyl-L-methionine = N(7)-methylguanosine(46) in tRNA + S-adenosyl-L-homocysteine. It participates in tRNA modification; N(7)-methylguanine-tRNA biosynthesis. Catalyzes the formation of N(7)-methylguanine at position 46 (m7G46) in tRNA. This Bombyx mori (Silk moth) protein is tRNA (guanine-N(7)-)-methyltransferase.